A 423-amino-acid chain; its full sequence is Serine--tRNA ligase (423 aa).

An L-serine-binding site is contributed by 231–233 (TGE). 262–264 (RSE) is a binding site for ATP. Position 285 (E285) interacts with L-serine. Position 349–352 (349–352 (EISS)) interacts with ATP. Position 385 (S385) interacts with L-serine.

The protein belongs to the class-II aminoacyl-tRNA synthetase family. Type-1 seryl-tRNA synthetase subfamily. Homodimer. The tRNA molecule binds across the dimer.

It is found in the cytoplasm. The catalysed reaction is tRNA(Ser) + L-serine + ATP = L-seryl-tRNA(Ser) + AMP + diphosphate + H(+). It catalyses the reaction tRNA(Sec) + L-serine + ATP = L-seryl-tRNA(Sec) + AMP + diphosphate + H(+). The protein operates within aminoacyl-tRNA biosynthesis; selenocysteinyl-tRNA(Sec) biosynthesis; L-seryl-tRNA(Sec) from L-serine and tRNA(Sec): step 1/1. Functionally, catalyzes the attachment of serine to tRNA(Ser). Is also able to aminoacylate tRNA(Sec) with serine, to form the misacylated tRNA L-seryl-tRNA(Sec), which will be further converted into selenocysteinyl-tRNA(Sec). The sequence is that of Serine--tRNA ligase from Coxiella burnetii (strain CbuK_Q154) (Coxiella burnetii (strain Q154)).